A 708-amino-acid polypeptide reads, in one-letter code: Glycine--tRNA ligase beta subunit (708 aa).

This sequence belongs to the class-II aminoacyl-tRNA synthetase family. Tetramer of two alpha and two beta subunits.

It is found in the cytoplasm. It catalyses the reaction tRNA(Gly) + glycine + ATP = glycyl-tRNA(Gly) + AMP + diphosphate. This is Glycine--tRNA ligase beta subunit from Paracidovorax citrulli (strain AAC00-1) (Acidovorax citrulli).